The primary structure comprises 64 residues: Prokaryotic ubiquitin-like protein Pup (64 aa).

The tract at residues 1–37 (MAQEQTKRGGGGGDDDDIAGSTAAGQERREKLTEETD) is disordered. The interval 21–58 (STAAGQERREKLTEETDDLLDEIDDVLEENAEDFVRAY) is ARC ATPase binding. Residues 23-52 (AAGQERREKLTEETDDLLDEIDDVLEENAE) adopt a coiled-coil conformation. At Gln64 the chain carries Deamidated glutamine. Residue Gln64 forms an Isoglutamyl lysine isopeptide (Gln-Lys) (interchain with K-? in acceptor proteins) linkage.

It belongs to the prokaryotic ubiquitin-like protein family. In terms of assembly, strongly interacts with the proteasome-associated ATPase ARC through a hydrophobic interface; the interacting region of Pup lies in its C-terminal half. There is one Pup binding site per ARC hexamer ring. In terms of processing, is modified by deamidation of its C-terminal glutamine to glutamate by the deamidase Dop, a prerequisite to the subsequent pupylation process.

It participates in protein degradation; proteasomal Pup-dependent pathway. Protein modifier that is covalently attached to lysine residues of substrate proteins, thereby targeting them for proteasomal degradation. The tagging system is termed pupylation. This is Prokaryotic ubiquitin-like protein Pup from Mycobacterium tuberculosis (strain ATCC 25177 / H37Ra).